The primary structure comprises 619 residues: Pescadillo homolog (619 aa).

The interval 303-324 (ADKDQKDQDTIEDAEEVTEPTV) is disordered. Residues 312-324 (TIEDAEEVTEPTV) show a composition bias toward acidic residues. The region spanning 353–452 (PTSQLFSKFI…ELVSVGDYAP (100 aa)) is the BRCT domain. The disordered stretch occupies residues 456 to 567 (LPPHLSPWGD…STKAALTPEE (112 aa)). Coiled-coil stretches lie at residues 472 to 560 (NAKA…ASTK) and 588 to 619 (MQYG…LKDV). Positions 480 to 522 (EAEEEEEEEEEDEEEEEEEEEIEVADGDEDQDDEEEEEIEDED) are enriched in acidic residues. Over residues 523 to 539 (LKAQKELEMEVAGKKFS) the composition is skewed to basic and acidic residues.

This sequence belongs to the pescadillo family. In terms of assembly, component of the NOP7 complex, composed of ERB1, NOP7 and YTM1. The complex is held together by ERB1, which interacts with NOP7 via its N-terminal domain and with YTM1 via a high-affinity interaction between the seven-bladed beta-propeller domains of the 2 proteins. The NOP7 complex associates with the 66S pre-ribosome.

The protein resides in the nucleus. It is found in the nucleolus. It localises to the nucleoplasm. Its function is as follows. Component of the NOP7 complex, which is required for maturation of the 25S and 5.8S ribosomal RNAs and formation of the 60S ribosome. This chain is Pescadillo homolog, found in Lodderomyces elongisporus (strain ATCC 11503 / CBS 2605 / JCM 1781 / NBRC 1676 / NRRL YB-4239) (Yeast).